Reading from the N-terminus, the 251-residue chain is NADPH-dependent oxidoreductase (251 aa).

This sequence belongs to the flavin oxidoreductase frp family. It depends on FMN as a cofactor.

Functionally, reduces FMN, organic nitro compounds and disulfide DTNB. Involved in maintenance of the cellular redox state and the disulfide stress response. The polypeptide is NADPH-dependent oxidoreductase (nfrA) (Staphylococcus aureus (strain Mu50 / ATCC 700699)).